The primary structure comprises 606 residues: Pyruvate decarboxylase 2 (606 aa).

Asp68 and His155 together coordinate substrate. Positions 433–515 are thiamine pyrophosphate binding; that stretch reads DSWFNCQKLK…FLINNGGYTI (83 aa). 3 residues coordinate Mg(2+): Asp483, Asn510, and Gly512. Glu516 serves as a coordination point for substrate.

It belongs to the TPP enzyme family. Homotetramer. A metal cation is required as a cofactor. Thiamine diphosphate serves as cofactor.

The enzyme catalyses a 2-oxocarboxylate + H(+) = an aldehyde + CO2. The sequence is that of Pyruvate decarboxylase 2 (PDC2) from Oryza sativa subsp. indica (Rice).